The sequence spans 258 residues: Acetylglutamate kinase (258 aa).

Residues 44–45, Arg-66, and Asn-158 each bind substrate; that span reads GG. ATP is bound by residues 181–186 and 209–211; these read DVSGIL and IIT.

Belongs to the acetylglutamate kinase family. ArgB subfamily. As to quaternary structure, homodimer.

It is found in the cytoplasm. The catalysed reaction is N-acetyl-L-glutamate + ATP = N-acetyl-L-glutamyl 5-phosphate + ADP. It participates in amino-acid biosynthesis; L-arginine biosynthesis; N(2)-acetyl-L-ornithine from L-glutamate: step 2/4. In terms of biological role, catalyzes the ATP-dependent phosphorylation of N-acetyl-L-glutamate. This is Acetylglutamate kinase from Citrobacter koseri (strain ATCC BAA-895 / CDC 4225-83 / SGSC4696).